The following is a 315-amino-acid chain: ATP synthase gamma chain (315 aa).

It belongs to the ATPase gamma chain family. In terms of assembly, F-type ATPases have 2 components, CF(1) - the catalytic core - and CF(0) - the membrane proton channel. CF(1) has five subunits: alpha(3), beta(3), gamma(1), delta(1), epsilon(1). CF(0) has three main subunits: a, b and c.

It localises to the cellular thylakoid membrane. Functionally, produces ATP from ADP in the presence of a proton gradient across the membrane. The gamma chain is believed to be important in regulating ATPase activity and the flow of protons through the CF(0) complex. The polypeptide is ATP synthase gamma chain (Nostoc punctiforme (strain ATCC 29133 / PCC 73102)).